We begin with the raw amino-acid sequence, 3527 residues long: BEACH domain-containing protein A2 (3527 aa).

3 disordered regions span residues 25 to 46, 385 to 423, and 454 to 490; these read AGEA…PSSS, SSPH…LNSR, and ESSG…CEQG. Residues 28–46 show a composition bias toward low complexity; it reads AISDPTTPPSSSQASPSSS. Over residues 455–469 the composition is skewed to low complexity; it reads SSGTSTSLLSQTKLT. Over residues 472–481 the composition is skewed to polar residues; it reads SRRQTPSANN. 5 LRR repeats span residues 1447–1470, 1499–1522, 1542–1565, 1566–1588, and 2001–2024; these read KLES…NYED, FSHL…VLSN, SIQI…SHNL, AILR…DVEV, and SSEM…SRSS. Disordered stretches follow at residues 1992–2023 and 2046–2081; these read GDHV…DSRS and IPSP…SQGS. Positions 1998–2020 are enriched in polar residues; sequence VSASSEMKSLDLTGSSSQVQPID. 3 LRR repeats span residues 2128-2151, 2221-2247, and 2313-2336; these read TEQI…VDPE, LLSI…LLSI, and VSAV…LDTD. The segment at 2658–2680 is disordered; sequence VNTDEKSETGSPIKSSSGKMDEI. Over residues 2666–2675 the composition is skewed to polar residues; sequence TGSPIKSSSG. A BEACH-type PH domain is found at 2704 to 2871; that stretch reads EHLEKIRFRY…EREEVFRNLL (168 aa). One can recognise a BEACH domain in the interval 2896–3188; the sequence is GSRLFKLMAK…QLFQKPHVKR (293 aa). WD repeat units lie at residues 3272-3311, 3322-3361, 3410-3451, and 3483-3522; these read HEGN…PRGS, AHTA…FVRQ, DLIV…DPVS, and FHKQ…LKAS.

This is BEACH domain-containing protein A2 from Arabidopsis thaliana (Mouse-ear cress).